Here is a 199-residue protein sequence, read N- to C-terminus: MNPRQAEVERNTLETQIRVTLNLDGSGQADLHTGLPFLDHMIHQIVRHGLFDMHIQAQGDLDIDAHHTVEDIGIALGQAFARAVGDKAGIQRYGHAYVPLDEALSRVVVDLSGRPGLIFAVEFPRAQVGDFDVDLFHEFFQGFVNHAQVTLHLDTLRGSNTHHIAETLFKACGRALRMAVAPDPRMAGAVPSTKGTLTL.

The protein belongs to the imidazoleglycerol-phosphate dehydratase family.

Its subcellular location is the cytoplasm. It carries out the reaction D-erythro-1-(imidazol-4-yl)glycerol 3-phosphate = 3-(imidazol-4-yl)-2-oxopropyl phosphate + H2O. It functions in the pathway amino-acid biosynthesis; L-histidine biosynthesis; L-histidine from 5-phospho-alpha-D-ribose 1-diphosphate: step 6/9. This Acidithiobacillus ferrooxidans (strain ATCC 53993 / BNL-5-31) (Leptospirillum ferrooxidans (ATCC 53993)) protein is Imidazoleglycerol-phosphate dehydratase.